The sequence spans 209 residues: Octanoyltransferase (209 aa).

In terms of domain architecture, BPL/LPL catalytic spans 29 to 209 (EHTPDELWVV…CHQLQPEIDS (181 aa)). Residues 71–78 (RGGQVTYH), 138–140 (SLG), and 151–153 (GLA) contribute to the substrate site. C169 serves as the catalytic Acyl-thioester intermediate.

It belongs to the LipB family.

It is found in the cytoplasm. It catalyses the reaction octanoyl-[ACP] + L-lysyl-[protein] = N(6)-octanoyl-L-lysyl-[protein] + holo-[ACP] + H(+). It participates in protein modification; protein lipoylation via endogenous pathway; protein N(6)-(lipoyl)lysine from octanoyl-[acyl-carrier-protein]: step 1/2. Its function is as follows. Catalyzes the transfer of endogenously produced octanoic acid from octanoyl-acyl-carrier-protein onto the lipoyl domains of lipoate-dependent enzymes. Lipoyl-ACP can also act as a substrate although octanoyl-ACP is likely to be the physiological substrate. The protein is Octanoyltransferase of Hydrogenovibrio crunogenus (strain DSM 25203 / XCL-2) (Thiomicrospira crunogena).